The primary structure comprises 435 residues: 3-phosphoshikimate 1-carboxyvinyltransferase (435 aa).

3 residues coordinate 3-phosphoshikimate: K21, S22, and R26. K21 contacts phosphoenolpyruvate. Phosphoenolpyruvate-binding residues include G100 and R128. 3-phosphoshikimate contacts are provided by S171, S172, Q173, S199, D313, and K340. Q173 is a phosphoenolpyruvate binding site. The Proton acceptor role is filled by D313. Phosphoenolpyruvate is bound by residues R344, R386, and K412.

The protein belongs to the EPSP synthase family. Monomer.

The protein resides in the cytoplasm. The enzyme catalyses 3-phosphoshikimate + phosphoenolpyruvate = 5-O-(1-carboxyvinyl)-3-phosphoshikimate + phosphate. The protein operates within metabolic intermediate biosynthesis; chorismate biosynthesis; chorismate from D-erythrose 4-phosphate and phosphoenolpyruvate: step 6/7. Catalyzes the transfer of the enolpyruvyl moiety of phosphoenolpyruvate (PEP) to the 5-hydroxyl of shikimate-3-phosphate (S3P) to produce enolpyruvyl shikimate-3-phosphate and inorganic phosphate. In Clostridium novyi (strain NT), this protein is 3-phosphoshikimate 1-carboxyvinyltransferase.